A 166-amino-acid polypeptide reads, in one-letter code: Large ribosomal subunit protein uL10 (166 aa).

The protein belongs to the universal ribosomal protein uL10 family. In terms of assembly, part of the ribosomal stalk of the 50S ribosomal subunit. The N-terminus interacts with L11 and the large rRNA to form the base of the stalk. The C-terminus forms an elongated spine to which L12 dimers bind in a sequential fashion forming a multimeric L10(L12)X complex.

Its function is as follows. Forms part of the ribosomal stalk, playing a central role in the interaction of the ribosome with GTP-bound translation factors. In Mesoplasma florum (strain ATCC 33453 / NBRC 100688 / NCTC 11704 / L1) (Acholeplasma florum), this protein is Large ribosomal subunit protein uL10.